A 305-amino-acid chain; its full sequence is tRNA pseudouridine synthase B (305 aa).

The Nucleophile role is filled by aspartate 48.

This sequence belongs to the pseudouridine synthase TruB family. Type 1 subfamily.

It catalyses the reaction uridine(55) in tRNA = pseudouridine(55) in tRNA. Functionally, responsible for synthesis of pseudouridine from uracil-55 in the psi GC loop of transfer RNAs. The protein is tRNA pseudouridine synthase B of Mannheimia succiniciproducens (strain KCTC 0769BP / MBEL55E).